A 339-amino-acid polypeptide reads, in one-letter code: Major pollen allergen Lol p 5b (339 aa).

The first 25 residues, 1-25 (MAVQKHTVALFLAVALVAGPAASYA), serve as a signal peptide directing secretion. Repeat copies occupy residues 32 to 34 (PAT), 35 to 37 (PAT), 38 to 40 (PAA), 41 to 43 (PAT), 44 to 46 (AAT), 47 to 49 (PAT), 50 to 52 (PAT), 53 to 55 (PAT), and 56 to 58 (PAA). The 9 X 3 AA tandem repeats of [PA]-A-[TA] stretch occupies residues 32–58 (PATPATPAAPATAATPATPATPATPAA). Over residues 36 to 58 (ATPAAPATAATPATPATPATPAA) the composition is skewed to low complexity. Residues 36 to 65 (ATPAAPATAATPATPATPATPAAVPSGKAT) are disordered. The 2-1; truncated repeat unit spans residues 285–290 (ATPAAA). A 6 X 9 AA approximate tandem repeats of T-A-T-A-T-P-A-A-A region spans residues 285-334 (ATPAAAATATPTPAAATATATPAAAYATATPAAATATATPAAATATPAAA). 4 consecutive repeat copies span residues 292–300 (TATPTPAAA), 301–309 (TATATPAAA), 310–318 (YATATPAAA), and 319–327 (TATATPAAA). One copy of the 2-6; truncated repeat lies at 328 to 334 (TATPAAA).

This sequence belongs to the Poa p IX/Phl p VI allergen family. Pollen, starch granules.

This Lolium perenne (Perennial ryegrass) protein is Major pollen allergen Lol p 5b.